The sequence spans 1013 residues: Prominin-like protein (1013 aa).

A helical transmembrane segment spans residues 32-52 (IAYLAICGLSVAIFGFALATL). 2 N-linked (GlcNAc...) asparagine glycosylation sites follow: N99 and N116. Helical transmembrane passes span 215 to 235 (CGIC…IAFV), 489 to 509 (VVSL…IFAL), and 535 to 555 (LLLA…VGLF). N-linked (GlcNAc...) asparagine glycosylation is found at N576, N618, N803, and N824. Residues 852 to 872 (INGFWVGILLCALLFLPILFV) form a helical membrane-spanning segment. The disordered stretch occupies residues 918 to 1013 (ANVPKKRRKA…YYYPGASEQD (96 aa)). N-linked (GlcNAc...) asparagine glycosylation occurs at N949. A compositionally biased stretch (gly residues) spans 950 to 963 (RSGGDRGGGGGDGA).

It belongs to the prominin family.

The protein resides in the membrane. The protein is Prominin-like protein of Drosophila melanogaster (Fruit fly).